The following is a 545-amino-acid chain: MAAKDIRFGEDARARMVRGVNVLANAVKATLGPKGRNVVLEKSFGAPTITKDGVSVAKEIELADKFENMGAQMVKEVASKTSDNAGDGTTTATVLAQALIREGMKAVAAGMNPMDLKRGIDKAVTSAVEELKKISKPCSTSKEIAQVGSISANSDTDIGELIAKAMDKVGKEGVITVEEGSGLENELDVVEGMQFDRGYLSPYFINNPQSMQAELEDPFILLHDKKISNVRDLLPILEGVAKAGKPLLIVAEDVEGEALATLVVNTIRGIVKVCAVKAPGFGDRRKAMLEDMAILTGGTVISEEVGLSLEKATINDLGRAKKVQVSKENTTIIDGAGDTADIEARIKQIKAQIEETTSDYDREKLQERVAKLAGGVAVIKVGAATEVEMKEKKARVEDALHATRAAVEEGIVPGGGVALIRAKAAIAELKGANEDQNHGIAIALRAMEAPLREIVTNAGDEPSVVLNRVAEGTGAFGYNAANGEFGDMIEFGILDPTKVTRSALQNAASIAGLMITTEAMVAEAPKKEEPAAPGGGMGGMGGMDF.

ATP contacts are provided by residues 30–33 (TLGP), K51, 87–91 (DGTTT), G415, 479–481 (NAA), and D495.

It belongs to the chaperonin (HSP60) family. In terms of assembly, forms a cylinder of 14 subunits composed of two heptameric rings stacked back-to-back. Interacts with the co-chaperonin GroES.

It is found in the cytoplasm. It carries out the reaction ATP + H2O + a folded polypeptide = ADP + phosphate + an unfolded polypeptide.. Its function is as follows. Together with its co-chaperonin GroES, plays an essential role in assisting protein folding. The GroEL-GroES system forms a nano-cage that allows encapsulation of the non-native substrate proteins and provides a physical environment optimized to promote and accelerate protein folding. This is Chaperonin GroEL 2 from Escherichia coli O1:K1 / APEC.